Reading from the N-terminus, the 560-residue chain is Long-chain-fatty-acid--CoA ligase (560 aa).

The protein belongs to the ATP-dependent AMP-binding enzyme family.

The catalysed reaction is a long-chain fatty acid + ATP + CoA = a long-chain fatty acyl-CoA + AMP + diphosphate. The chain is Long-chain-fatty-acid--CoA ligase (lcfA) from Bacillus subtilis (strain 168).